A 123-amino-acid chain; its full sequence is Probable non-functional immunoglobulin lambda variable 11-55 (123 aa).

Positions 1–19 (MALTPLLLLLLSHCTGSLS) are cleaved as a signal peptide. Residues 20–44 (RPVLTQPPSLSASPGATARLPCTLS) are framework-1. The Ig-like domain occupies 21 to 123 (PVLTQPPSLS…YCQVYESSAN (103 aa)). Cysteine 41 and cysteine 115 are oxidised to a cystine. Residues 45–53 (SDLSVGGKN) form a complementarity-determining-1 region. The interval 54 to 70 (MFWYQQKLGSSPRLFLY) is framework-2. Residues 71-77 (HYSDSDK) are complementarity-determining-2. A framework-3 region spans residues 78–115 (QLGPGVPSRVSGSKETSSNTAFLLISGLQPEDEADYYC). The complementarity-determining-3 stretch occupies residues 116–123 (QVYESSAN).

As to quaternary structure, immunoglobulins are composed of two identical heavy chains and two identical light chains; disulfide-linked.

It is found in the secreted. It localises to the cell membrane. In terms of biological role, probable non-functional open reading frame (ORF) of V region of the variable domain of immunoglobulin light chains. Non-functional ORF generally cannot participate in the synthesis of a productive immunoglobulin chain due to altered V-(D)-J or switch recombination and/or splicing site (at mRNA level) and/or conserved amino acid change (protein level). Immunoglobulins, also known as antibodies, are membrane-bound or secreted glycoproteins produced by B lymphocytes. In the recognition phase of humoral immunity, the membrane-bound immunoglobulins serve as receptors which, upon binding of a specific antigen, trigger the clonal expansion and differentiation of B lymphocytes into immunoglobulins-secreting plasma cells. Secreted immunoglobulins mediate the effector phase of humoral immunity, which results in the elimination of bound antigens. The antigen binding site is formed by the variable domain of one heavy chain, together with that of its associated light chain. Thus, each immunoglobulin has two antigen binding sites with remarkable affinity for a particular antigen. The variable domains are assembled by a process called V-(D)-J rearrangement and can then be subjected to somatic hypermutations which, after exposure to antigen and selection, allow affinity maturation for a particular antigen. The sequence is that of Probable non-functional immunoglobulin lambda variable 11-55 from Homo sapiens (Human).